The following is a 310-amino-acid chain: Ribonuclease Z (310 aa).

Residues H61, H63, D65, H66, and H139 each contribute to the Zn(2+) site. The active-site Proton acceptor is D65. A disordered region spans residues 150–175 (EDDRPGRFDRPKAEELGVPVGPKFGR). A compositionally biased stretch (basic and acidic residues) spans 153-164 (RPGRFDRPKAEE). Zn(2+) is bound by residues D210 and H268.

It belongs to the RNase Z family. In terms of assembly, homodimer. It depends on Zn(2+) as a cofactor.

The catalysed reaction is Endonucleolytic cleavage of RNA, removing extra 3' nucleotides from tRNA precursor, generating 3' termini of tRNAs. A 3'-hydroxy group is left at the tRNA terminus and a 5'-phosphoryl group is left at the trailer molecule.. Its function is as follows. Zinc phosphodiesterase, which displays some tRNA 3'-processing endonuclease activity. Probably involved in tRNA maturation, by removing a 3'-trailer from precursor tRNA. The polypeptide is Ribonuclease Z (Halorubrum lacusprofundi (strain ATCC 49239 / DSM 5036 / JCM 8891 / ACAM 34)).